Consider the following 204-residue polypeptide: MQYSSSSIEALIDAFSRLPGVGRKTARRLAMYVLQQPRLEAERLARALIDVKDRVIRCSVCQNVTDREEDPCSICTSQGRDRTVICVVESPVDVLAFEKTGHYRGLYHVLHGVISPLDGVGPDDIKIRELLGRLSPEGIGGVREIVLALNPTIEGETTSLYLSRLLKPLGVEVTKIARGIPVGAELEFIDEATLSRAMEGRSAV.

A C4-type zinc finger spans residues 58 to 75 (CSVCQNVTDREEDPCSIC). The Toprim domain maps to 83–181 (TVICVVESPV…EVTKIARGIP (99 aa)).

Belongs to the RecR family.

Functionally, may play a role in DNA repair. It seems to be involved in an RecBC-independent recombinational process of DNA repair. It may act with RecF and RecO. The chain is Recombination protein RecR from Chlorobium luteolum (strain DSM 273 / BCRC 81028 / 2530) (Pelodictyon luteolum).